A 74-amino-acid chain; its full sequence is Exodeoxyribonuclease 7 small subunit (74 aa).

It belongs to the XseB family. Heterooligomer composed of large and small subunits.

The protein localises to the cytoplasm. It carries out the reaction Exonucleolytic cleavage in either 5'- to 3'- or 3'- to 5'-direction to yield nucleoside 5'-phosphates.. Functionally, bidirectionally degrades single-stranded DNA into large acid-insoluble oligonucleotides, which are then degraded further into small acid-soluble oligonucleotides. The chain is Exodeoxyribonuclease 7 small subunit from Actinobacillus pleuropneumoniae serotype 5b (strain L20).